We begin with the raw amino-acid sequence, 357 residues long: tRNA-specific 2-thiouridylase MnmA (357 aa).

ATP contacts are provided by residues 7 to 14 (AMSGGVDS) and M33. Residue C101 is the Nucleophile of the active site. C101 and C198 are disulfide-bonded. G125 contacts ATP. The interval 148–150 (KDQ) is interaction with tRNA. Catalysis depends on C198, which acts as the Cysteine persulfide intermediate.

It belongs to the MnmA/TRMU family.

Its subcellular location is the cytoplasm. The enzyme catalyses S-sulfanyl-L-cysteinyl-[protein] + uridine(34) in tRNA + AH2 + ATP = 2-thiouridine(34) in tRNA + L-cysteinyl-[protein] + A + AMP + diphosphate + H(+). In terms of biological role, catalyzes the 2-thiolation of uridine at the wobble position (U34) of tRNA, leading to the formation of s(2)U34. In Herpetosiphon aurantiacus (strain ATCC 23779 / DSM 785 / 114-95), this protein is tRNA-specific 2-thiouridylase MnmA.